The sequence spans 454 residues: O-phospho-L-seryl-tRNA:Cys-tRNA synthase 2 (454 aa).

Residues 146–147, N251, and 274–276 each bind pyridoxal 5'-phosphate; these read AR and SGH. K277 carries the N6-(pyridoxal phosphate)lysine modification.

This sequence belongs to the SepCysS family. As to quaternary structure, homodimer. Interacts with SepRS. It depends on pyridoxal 5'-phosphate as a cofactor.

It carries out the reaction O-phospho-L-seryl-tRNA(Cys) + hydrogen sulfide + H(+) = L-cysteinyl-tRNA(Cys) + phosphate. Converts O-phospho-L-seryl-tRNA(Cys) (Sep-tRNA(Cys)) to L-cysteinyl-tRNA(Cys) (Cys-tRNA(Cys)). The protein is O-phospho-L-seryl-tRNA:Cys-tRNA synthase 2 of Methanoregula boonei (strain DSM 21154 / JCM 14090 / 6A8).